Reading from the N-terminus, the 199-residue chain is Holliday junction branch migration complex subunit RuvA (199 aa).

The interval 1-65 (MIGWLHGQII…EDALLLYGFL (65 aa)) is domain I. A domain II region spans residues 66–144 (DKEERSLFRS…QFDGSVSDTF (79 aa)). The flexible linker stretch occupies residues 144–148 (FQKQA). The tract at residues 149–199 (GSTHSQQEAISALEALGYKPQEAWKVVNKIDNGNKSCEQLIREALQILSSR) is domain III.

It belongs to the RuvA family. As to quaternary structure, homotetramer. Forms an RuvA(8)-RuvB(12)-Holliday junction (HJ) complex. HJ DNA is sandwiched between 2 RuvA tetramers; dsDNA enters through RuvA and exits via RuvB. An RuvB hexamer assembles on each DNA strand where it exits the tetramer. Each RuvB hexamer is contacted by two RuvA subunits (via domain III) on 2 adjacent RuvB subunits; this complex drives branch migration. In the full resolvosome a probable DNA-RuvA(4)-RuvB(12)-RuvC(2) complex forms which resolves the HJ.

Its subcellular location is the cytoplasm. The RuvA-RuvB-RuvC complex processes Holliday junction (HJ) DNA during genetic recombination and DNA repair, while the RuvA-RuvB complex plays an important role in the rescue of blocked DNA replication forks via replication fork reversal (RFR). RuvA specifically binds to HJ cruciform DNA, conferring on it an open structure. The RuvB hexamer acts as an ATP-dependent pump, pulling dsDNA into and through the RuvAB complex. HJ branch migration allows RuvC to scan DNA until it finds its consensus sequence, where it cleaves and resolves the cruciform DNA. The polypeptide is Holliday junction branch migration complex subunit RuvA (Legionella pneumophila (strain Paris)).